The primary structure comprises 657 residues: Leishmanolysin (657 aa).

Positions 1–41 (MSVDSSSSSTHRRRCVAARLVRLAAAGAAVTVAVGTAAAWA) are cleaved as a signal peptide. A propeptide spans 42–102 (HAGALQHRCI…DPRPGSAPTV (61 aa)) (activation peptide). The Extracellular segment spans residues 44 to 611 (GALQHRCIHD…DRMVGLATAA (568 aa)). Asn-107 carries N-linked (GlcNAc...) asparagine glycosylation. 2 disulfides stabilise this stretch: Cys-127/Cys-144 and Cys-193/Cys-232. His-266 serves as a coordination point for Zn(2+). Residue Glu-267 is part of the active site. A Zn(2+)-binding site is contributed by His-270. N-linked (GlcNAc...) asparagine glycosylation is present at Asn-302. Cystine bridges form between Cys-316/Cys-388, Cys-395/Cys-458, Cys-408/Cys-427, Cys-417/Cys-492, Cys-469/Cys-513, Cys-518/Cys-568, and Cys-538/Cys-561. His-336 serves as a coordination point for Zn(2+). 5 N-linked (GlcNAc...) asparagine glycosylation sites follow: Asn-399, Asn-409, Asn-445, Asn-466, and Asn-501. A helical membrane pass occupies residues 612 to 632 (TVLLGMVLSLMALVVVWLLLV). At 633–657 (SCPWWCCKLGGPPASVTPACSPETE) the chain is on the cytoplasmic side.

This sequence belongs to the peptidase M8 family. Zn(2+) is required as a cofactor.

It localises to the membrane. It catalyses the reaction Preference for hydrophobic residues at P1 and P1' and basic residues at P2' and P3'. A model nonapeptide is cleaved at -Ala-Tyr-|-Leu-Lys-Lys-.. Has an integral role during the infection of macrophages in the mammalian host. The polypeptide is Leishmanolysin (mspC) (Leishmania tropica).